A 419-amino-acid polypeptide reads, in one-letter code: Probable glycosidase C21B10.07 (419 aa).

Disordered regions lie at residues 1-20 (MGIPDSTTDSRHSLSSAALS) and 29-67 (DPARKNESTNDVIDNHTDTEIDDHDNDHENLDSNNNNEN). Basic and acidic residues predominate over residues 30 to 59 (PARKNESTNDVIDNHTDTEIDDHDNDHENL). A helical transmembrane segment spans residues 88 to 108 (FIWILIFIVALICSVLIGVLG). Positions 122 to 387 (PSYKAKTYSL…WAGSSVYSSA (266 aa)) constitute a GH16 domain. Glu-237 acts as the Nucleophile in catalysis. Residue Glu-242 is the Proton donor of the active site.

The protein belongs to the glycosyl hydrolase 16 family.

It localises to the membrane. This is Probable glycosidase C21B10.07 from Schizosaccharomyces pombe (strain 972 / ATCC 24843) (Fission yeast).